Here is a 135-residue protein sequence, read N- to C-terminus: Transcriptional regulator HosA (135 aa).

Positions 4 to 134 (RNKAFHQLRQ…FMQLVRKMMN (131 aa)) constitute an HTH marR-type domain. The segment at residues 48–71 (QVALIEAAVSTKATLAEMLARMEN) is a DNA-binding region (H-T-H motif).

Involved in the temperature-dependent positive control of flagellum-driven swimming motility and cellular aggregation. Regulates fliC expression by directly interacting with fliC promoter. The polypeptide is Transcriptional regulator HosA (hosA) (Escherichia coli O111:H-).